The following is a 250-amino-acid chain: Triosephosphate isomerase (250 aa).

Substrate is bound at residue 9 to 11; the sequence is NWK. His96 serves as the catalytic Electrophile. Glu168 functions as the Proton acceptor in the catalytic mechanism. Substrate contacts are provided by residues Gly174, Ser216, and 237-238; that span reads GG.

The protein belongs to the triosephosphate isomerase family. In terms of assembly, homodimer.

The protein localises to the cytoplasm. The catalysed reaction is D-glyceraldehyde 3-phosphate = dihydroxyacetone phosphate. Its pathway is carbohydrate biosynthesis; gluconeogenesis. It functions in the pathway carbohydrate degradation; glycolysis; D-glyceraldehyde 3-phosphate from glycerone phosphate: step 1/1. In terms of biological role, involved in the gluconeogenesis. Catalyzes stereospecifically the conversion of dihydroxyacetone phosphate (DHAP) to D-glyceraldehyde-3-phosphate (G3P). The protein is Triosephosphate isomerase of Leptospira interrogans serogroup Icterohaemorrhagiae serovar copenhageni (strain Fiocruz L1-130).